The following is a 221-amino-acid chain: Superoxide dismutase [Mn] 1, mitochondrial (221 aa).

A mitochondrion-targeting transit peptide spans 1-24; the sequence is MLQNTVRCVSKLVQPITGVAAVRS. His50, His98, Asp182, and His186 together coordinate Mn(2+).

The protein belongs to the iron/manganese superoxide dismutase family. Homotetramer. Mn(2+) serves as cofactor.

It localises to the mitochondrion matrix. The enzyme catalyses 2 superoxide + 2 H(+) = H2O2 + O2. In terms of biological role, destroys superoxide anion radicals which are normally produced within the cells and which are toxic to biological systems. In Caenorhabditis elegans, this protein is Superoxide dismutase [Mn] 1, mitochondrial (sod-2).